The primary structure comprises 501 residues: NAD(P)H-quinone oxidoreductase chain 4, chloroplastic (501 aa).

Transmembrane regions (helical) follow at residues 5-25 (FPWLTIIVLLPIFAGSLIFFL), 38-58 (ICICSLELLLTTYTFCYHFQL), 85-105 (GLSIGPILLTGFITTLATLAA), 112-130 (SRLFHFLMLAMYSGQIGSF), 135-155 (LLLFFIMWELELIPVYLLLAM), 168-188 (FILYTAGGSIFLLIGVLGIGL), 209-229 (ALEIILYIGFLIAFSVKLPII), 243-263 (HYSTCMLLAGILLKMGAYGLV), 275-295 (SIFSPWLIIVGAIQIIYAALT), 306-326 (IAYSSVSHMGFIIIGIGSITD), 331-351 (GAILQIISHGFIGAALFFLAG), 387-407 (LALPGMSGFLAELIVFFGIIT), 417-437 (ILITFVMAIGMILTPIYLLSM), and 463-483 (LFVSISILLPIIAIGIYPDFV).

The protein belongs to the complex I subunit 4 family.

It localises to the plastid. It is found in the chloroplast thylakoid membrane. It carries out the reaction a plastoquinone + NADH + (n+1) H(+)(in) = a plastoquinol + NAD(+) + n H(+)(out). It catalyses the reaction a plastoquinone + NADPH + (n+1) H(+)(in) = a plastoquinol + NADP(+) + n H(+)(out). The polypeptide is NAD(P)H-quinone oxidoreductase chain 4, chloroplastic (Eucalyptus globulus subsp. globulus (Tasmanian blue gum)).